Reading from the N-terminus, the 564-residue chain is NAD-dependent malic enzyme (564 aa).

The active-site Proton donor is Tyr-104. Arg-157 provides a ligand contact to NAD(+). The Proton acceptor role is filled by Lys-175. A divalent metal cation is bound by residues Glu-246, Asp-247, and Asp-270. NAD(+)-binding residues include Asp-270 and Asn-417.

The protein belongs to the malic enzymes family. In terms of assembly, homotetramer. Mg(2+) serves as cofactor. The cofactor is Mn(2+).

The catalysed reaction is (S)-malate + NAD(+) = pyruvate + CO2 + NADH. The enzyme catalyses oxaloacetate + H(+) = pyruvate + CO2. The chain is NAD-dependent malic enzyme from Aeromonas hydrophila subsp. hydrophila (strain ATCC 7966 / DSM 30187 / BCRC 13018 / CCUG 14551 / JCM 1027 / KCTC 2358 / NCIMB 9240 / NCTC 8049).